A 190-amino-acid chain; its full sequence is Secreted isochorismatase effector Isc1 (190 aa).

Active-site residues include Asp26, Lys100, and Cys133.

Belongs to the isochorismatase family.

Its subcellular location is the secreted. The protein resides in the host cytoplasm. The protein localises to the host nucleus. The catalysed reaction is isochorismate + H2O = (2S,3S)-2,3-dihydroxy-2,3-dihydrobenzoate + pyruvate. Secreted isochorismatase required for full virulence of V.dahliae. Suppresses salicylate-mediated innate immunity of the host by disrupting the plant salicylate metabolism pathway via hydrolysis of its isochorismate precursor. This chain is Secreted isochorismatase effector Isc1, found in Verticillium dahliae (strain VdLs.17 / ATCC MYA-4575 / FGSC 10137) (Verticillium wilt).